We begin with the raw amino-acid sequence, 399 residues long: Zona occludens toxin (399 aa).

In terms of biological role, increases the permeability of the small intestine mucosa by affecting the structure of intercellular tight junctions (zonula occludens). The chain is Zona occludens toxin (zot) from Vibrio cholerae serotype O1 (strain ATCC 39315 / El Tor Inaba N16961).